The primary structure comprises 439 residues: Putative myrosinase 3 (439 aa).

The signal sequence occupies residues 1–19 (MKFRALGLVLLLAVETCKA). N-linked (GlcNAc...) asparagine glycosylation is present at asparagine 33. A beta-D-glucoside contacts are provided by residues histidine 145, 190–191 (NQ), and tyrosine 316. Asparagine 336 carries an N-linked (GlcNAc...) asparagine glycan. A beta-D-glucoside-binding residues include glutamate 386 and tryptophan 404. Residue glutamate 386 is the Nucleophile of the active site.

It belongs to the glycosyl hydrolase 1 family. In terms of tissue distribution, expressed specifically in stamens and petals.

The enzyme catalyses a thioglucoside + H2O = a sugar + a thiol.. In Arabidopsis thaliana (Mouse-ear cress), this protein is Putative myrosinase 3.